A 217-amino-acid polypeptide reads, in one-letter code: Magnetosome protein MamA (217 aa).

TPR repeat units follow at residues 12-44 (VTLYAHYGLSVAKKLGMNMVDAFRAAFSVNDDI), 46-79 (QVYYRDKGISHAKAGRYSQAVMLLEQVYDADAFD), 80-113 (VDVALHLGIAYVKTGAVDRGTELLERSLADAPDN), 114-147 (VKVATVLGLTYVQVQKYDLAVPLLIKVAEANPIN), 148-181 (FNVRFRLGVALDNLGRFDEAIDSFKIALGLRPNE), and 182-215 (GKVHRAIAFSYEQMGRHEEALPHFKKANELDEGA). The segment at 41–112 (NDDIRQVYYR…LERSLADAPD (72 aa)) is N-terminal domain (NTD). Residues 113–217 (NVKVATVLGL…ANELDEGASV (105 aa)) are C-terminal domain (CTD).

It belongs to the magnetosome MamA family. In terms of assembly, oligomerizes into high molecular weight complexes (at least 560 kDa). Forms round, 20 nm diameter complexes with a central cavity. Interacts with full-length Mms6. Probably binds MamC.

The protein resides in the magnetosome membrane. Its function is as follows. Probably forms a large homooligomer on which other magnetosome subunits assemble. Required for formation of functional magnetosomes from pre-existing vesicles, it has a dynamic location in the cell. This chain is Magnetosome protein MamA, found in Paramagnetospirillum magneticum (strain ATCC 700264 / AMB-1) (Magnetospirillum magneticum).